The chain runs to 339 residues: Heat stress transcription factor C-1a (339 aa).

Residues glutamate 154–alanine 217 are a coiled coil. A hydrophobic repeat HR-A/B region spans residues leucine 176 to alanine 212. A disordered region spans residues alanine 227–proline 248. Residues arginine 229–arginine 233 carry the Nuclear localization signal motif.

This sequence belongs to the HSF family. Class C subfamily. As to quaternary structure, homotrimer. Exhibits temperature-dependent phosphorylation.

The protein localises to the nucleus. In terms of biological role, transcriptional regulator that specifically binds DNA of heat shock promoter elements (HSE). This chain is Heat stress transcription factor C-1a (HSFC1A), found in Oryza sativa subsp. japonica (Rice).